The sequence spans 112 residues: Colipase (112 aa).

A signal peptide spans 1–17 (MEKVLALLLVTLTVAYA). Positions 18–22 (VPDPR) are cleaved as a propeptide — enterostatin, activation peptide. 5 disulfide bridges follow: Cys-34–Cys-45, Cys-40–Cys-56, Cys-44–Cys-78, Cys-66–Cys-86, and Cys-80–Cys-104.

The protein belongs to the colipase family. Forms a 1:1 stoichiometric complex with pancreatic lipase. As to expression, expressed by the pancreas.

Its subcellular location is the secreted. In terms of biological role, colipase is a cofactor of pancreatic lipase. It allows the lipase to anchor itself to the lipid-water interface. Without colipase the enzyme is washed off by bile salts, which have an inhibitory effect on the lipase. Its function is as follows. Enterostatin has a biological activity as a satiety signal. The polypeptide is Colipase (CLPS) (Sus scrofa (Pig)).